Reading from the N-terminus, the 704-residue chain is Elongation factor G (704 aa).

The region spanning 8–290 (EKYRNIGICA…GVVRYLPAPN (283 aa)) is the tr-type G domain. Residues 17–24 (AHVDAGKT), 88–92 (DTPGH), and 142–145 (NKMD) each bind GTP.

It belongs to the TRAFAC class translation factor GTPase superfamily. Classic translation factor GTPase family. EF-G/EF-2 subfamily.

It localises to the cytoplasm. Functionally, catalyzes the GTP-dependent ribosomal translocation step during translation elongation. During this step, the ribosome changes from the pre-translocational (PRE) to the post-translocational (POST) state as the newly formed A-site-bound peptidyl-tRNA and P-site-bound deacylated tRNA move to the P and E sites, respectively. Catalyzes the coordinated movement of the two tRNA molecules, the mRNA and conformational changes in the ribosome. This Francisella tularensis subsp. holarctica (strain LVS) protein is Elongation factor G.